Here is a 322-residue protein sequence, read N- to C-terminus: Mas-related G-protein coupled receptor member B5 (322 aa).

The Extracellular portion of the chain corresponds to 1 to 34; that stretch reads MGLTTPAWNINNTVVNGSNNTEHFSCVSKFNTLN. 3 N-linked (GlcNAc...) asparagine glycosylation sites follow: Asn-11, Asn-16, and Asn-19. The helical transmembrane segment at 35 to 55 threads the bilayer; sequence FLTVIIAMFGLAGNAIVLWLL. Topologically, residues 56–70 are cytoplasmic; the sequence is AFHLPRNAFSVYVCN. A helical transmembrane segment spans residues 71–91; sequence LACADFLQLCTQILGSLECFL. The Extracellular segment spans residues 92-98; sequence QLNRRHT. Residues 99–119 form a helical membrane-spanning segment; the sequence is FFLTVVFMFAYLAGLCMIAAI. Over 120 to 147 the chain is Cytoplasmic; it reads SVERSLSVMWPIWYHCQRPRHTSSIMCA. A helical membrane pass occupies residues 148–168; that stretch reads LLWAFCLLLNFLLGEGCGLLF. Residues 169–172 are Extracellular-facing; it reads SDPK. The helical transmembrane segment at 173-193 threads the bilayer; sequence YYFCITCALITTALIILLTVV. Residues 194–216 are Cytoplasmic-facing; that stretch reads PSVSSLALLVKMICGSHRIPVTR. The helical transmembrane segment at 217 to 237 threads the bilayer; it reads FYVTIALTLVVFIFLGLPFGI. The Extracellular segment spans residues 238–260; it reads YSSFLIMFKEFQSIFSYHVLEVT. The chain crosses the membrane as a helical span at residues 261-281; that stretch reads IFLSCVNSCANPIIYFLVGSI. Residues 282 to 322 lie on the Cytoplasmic side of the membrane; the sequence is RQHRLQWQSLKLLLQRAMQDTPEEDSGERVPSQRSGELESV. A disordered region spans residues 302 to 322; sequence TPEEDSGERVPSQRSGELESV.

It belongs to the G-protein coupled receptor 1 family. Mas subfamily.

The protein localises to the membrane. Orphan receptor. Probably involved in the function of nociceptive neurons. May regulate nociceptor function and/or development, including the sensation or modulation of pain. This is Mas-related G-protein coupled receptor member B5 (Mrgprb5) from Mus musculus (Mouse).